A 268-amino-acid polypeptide reads, in one-letter code: Glutamate 5-kinase (268 aa).

Lysine 15 provides a ligand contact to ATP. 3 residues coordinate substrate: serine 55, aspartate 142, and asparagine 158. Residue 178-179 coordinates ATP; sequence SD.

The protein belongs to the glutamate 5-kinase family.

The protein resides in the cytoplasm. The enzyme catalyses L-glutamate + ATP = L-glutamyl 5-phosphate + ADP. It participates in amino-acid biosynthesis; L-proline biosynthesis; L-glutamate 5-semialdehyde from L-glutamate: step 1/2. Catalyzes the transfer of a phosphate group to glutamate to form L-glutamate 5-phosphate. This Oenococcus oeni (strain ATCC BAA-331 / PSU-1) protein is Glutamate 5-kinase.